Reading from the N-terminus, the 267-residue chain is Putative carbamate hydrolase RutD (267 aa).

Residues 14 to 115 enclose the AB hydrolase-1 domain; it reads PTLVLSAGLG…EKLVVVNGWP (102 aa).

The protein belongs to the AB hydrolase superfamily. Hydrolase RutD family.

It carries out the reaction carbamate + 2 H(+) = NH4(+) + CO2. In terms of biological role, involved in pyrimidine catabolism. May facilitate the hydrolysis of carbamate, a reaction that can also occur spontaneously. The polypeptide is Putative carbamate hydrolase RutD (Serratia proteamaculans (strain 568)).